The sequence spans 156 residues: Arginine repressor (156 aa).

The protein belongs to the ArgR family.

Its subcellular location is the cytoplasm. Its pathway is amino-acid biosynthesis; L-arginine biosynthesis [regulation]. Regulates arginine biosynthesis genes. In Shewanella sediminis (strain HAW-EB3), this protein is Arginine repressor.